The primary structure comprises 94 residues: Acylphosphatase (94 aa).

The region spanning 7–94 is the Acylphosphatase-like domain; sequence AVQARVYGRV…TAPGDFRIVA (88 aa). Active-site residues include arginine 22 and asparagine 40.

It belongs to the acylphosphatase family.

The catalysed reaction is an acyl phosphate + H2O = a carboxylate + phosphate + H(+). In Mesorhizobium japonicum (strain LMG 29417 / CECT 9101 / MAFF 303099) (Mesorhizobium loti (strain MAFF 303099)), this protein is Acylphosphatase (acyP).